The sequence spans 92 residues: Large ribosomal subunit protein uL24c (92 aa).

Belongs to the universal ribosomal protein uL24 family. Part of the 50S ribosomal subunit.

Its subcellular location is the plastid. The protein resides in the chloroplast. Its function is as follows. One of two assembly initiator proteins, it binds directly to the 5'-end of the 23S rRNA, where it nucleates assembly of the 50S subunit. This Gracilaria tenuistipitata var. liui (Red alga) protein is Large ribosomal subunit protein uL24c (rpl24).